The sequence spans 98 residues: Feather keratin 2 (98 aa).

An N-acetylserine modification is found at Ser2.

It belongs to the avian keratin family. As to quaternary structure, the avian keratins (F-ker, S-ker, C-ker and B-ker) are a complex mixture of very similar polypeptides.

This Gallus gallus (Chicken) protein is Feather keratin 2.